A 209-amino-acid polypeptide reads, in one-letter code: Guanylate kinase (209 aa).

The Guanylate kinase-like domain occupies 5–182; it reads GLLIVISGPS…AVTKINSIIV (178 aa). Residue 12–19 coordinates ATP; that stretch reads GPSGAGKG.

It belongs to the guanylate kinase family.

It is found in the cytoplasm. It catalyses the reaction GMP + ATP = GDP + ADP. Its function is as follows. Essential for recycling GMP and indirectly, cGMP. This chain is Guanylate kinase, found in Clostridium acetobutylicum (strain ATCC 824 / DSM 792 / JCM 1419 / IAM 19013 / LMG 5710 / NBRC 13948 / NRRL B-527 / VKM B-1787 / 2291 / W).